The chain runs to 851 residues: MQRLQRGLVLLLWAGLGILAITALASFYVDLAWFAELNALPVLWTRVLARWGLGLGAFAFALAVVGSNIRACWRGASTAGAWAIALGLSGGLAWSLSQHWFALLLWLHQVPVGESDPIFGRDLGFFLFGLPFWETLQQWCFNLVLLTLITVALIYLVELGLSEQRLTLALSLFAQRHLLILGGALFLLRAWGHWLERYELLYSTRGVVFGAGFADVHATLPATTLMSGVAFLTAVGFWALARQGIRFNLPLFKSWCPAWASSLLAPALLWGAYLGFGLLTTRLYPQLLQTLLVTPNELELERPYIEHNIRFTRAGFGLAEVEVKPFPEEGSLTWEILQQNQSTLRNVRLWDTEPLLATYRQLQEIRPYYQFPYVDVDRYRIGGELRQVMHAARELDFAQVPPAAQTWVNRRFFYTHGYGLTLSPVNVVTAEGLPDFFLSDIPPRVSPRYPEVAQVLRVEQPALYYSELTTTDVFVGAEARELDYPAADRYVYSSYRGTGGVPIPHLWQRLLYAWHFRDLRILLSRELSPSTRFLYRRQIRERVRQVMPFLLYDQDPYLVIQGGRLYWFFDAYTTSSRYPYSEHLPGFPFNYIRNSVKAVLDAYNGSIDWYIADPRDPLIQAYARIYPTLFKPLEAMPEPLRQHIRYPQDLFRVQVQQFATYHMTDPRVFYNREDQWQIPNQFRKRRRLPMQPQYLILTLPEDPQKGSPNQPEFVLLSPFTPLNKQNMVAWMAARCDGENYGKLLVYEFSKQRLIYGPEQVEARVNQDPAISEQIALWNEHGSRVNLGTLLVIPIETSLLYIQPLYLEAEQGRLPQLTRVIAAYEDRVVMEPTLSQALEALFSPTGSRRSNR.

A run of 7 helical transmembrane segments spans residues Gly-7–Phe-27, Val-47–Ser-67, Ala-76–Leu-96, Phe-141–Leu-161, Leu-168–Leu-188, Leu-220–Leu-240, and Trp-259–Leu-279.

This sequence belongs to the UPF0182 family.

Its subcellular location is the cell membrane. The chain is UPF0182 protein CYA_1810 from Synechococcus sp. (strain JA-3-3Ab) (Cyanobacteria bacterium Yellowstone A-Prime).